The sequence spans 247 residues: Agamous-like MADS-box protein AGL28 (247 aa).

The MADS-box domain occupies Leu-6–Asn-66. Residues Thr-91–His-168 are a coiled coil.

As to expression, expressed in roots, leaves and shoot apices.

It is found in the nucleus. Probable transcription factor that may function as a floral promoter operating upstream of known floral activators in the autonomous pathway. This Arabidopsis thaliana (Mouse-ear cress) protein is Agamous-like MADS-box protein AGL28.